A 111-amino-acid chain; its full sequence is Nucleoid-associated protein Tmel_0542 (111 aa).

Belongs to the YbaB/EbfC family. As to quaternary structure, homodimer.

The protein localises to the cytoplasm. It localises to the nucleoid. Its function is as follows. Binds to DNA and alters its conformation. May be involved in regulation of gene expression, nucleoid organization and DNA protection. In Thermosipho melanesiensis (strain DSM 12029 / CIP 104789 / BI429), this protein is Nucleoid-associated protein Tmel_0542.